We begin with the raw amino-acid sequence, 405 residues long: Tryptophan synthase beta chain (405 aa).

At lysine 95 the chain carries N6-(pyridoxal phosphate)lysine.

Belongs to the TrpB family. In terms of assembly, tetramer of two alpha and two beta chains. The cofactor is pyridoxal 5'-phosphate.

It catalyses the reaction (1S,2R)-1-C-(indol-3-yl)glycerol 3-phosphate + L-serine = D-glyceraldehyde 3-phosphate + L-tryptophan + H2O. It functions in the pathway amino-acid biosynthesis; L-tryptophan biosynthesis; L-tryptophan from chorismate: step 5/5. Functionally, the beta subunit is responsible for the synthesis of L-tryptophan from indole and L-serine. The polypeptide is Tryptophan synthase beta chain (Pseudomonas putida (strain GB-1)).